Consider the following 348-residue polypeptide: S-adenosylmethionine:tRNA ribosyltransferase-isomerase (348 aa).

This sequence belongs to the QueA family. As to quaternary structure, monomer.

Its subcellular location is the cytoplasm. It catalyses the reaction 7-aminomethyl-7-carbaguanosine(34) in tRNA + S-adenosyl-L-methionine = epoxyqueuosine(34) in tRNA + adenine + L-methionine + 2 H(+). Its pathway is tRNA modification; tRNA-queuosine biosynthesis. Transfers and isomerizes the ribose moiety from AdoMet to the 7-aminomethyl group of 7-deazaguanine (preQ1-tRNA) to give epoxyqueuosine (oQ-tRNA). This is S-adenosylmethionine:tRNA ribosyltransferase-isomerase from Polynucleobacter necessarius subsp. necessarius (strain STIR1).